Reading from the N-terminus, the 248-residue chain is Octanoyltransferase (248 aa).

The BPL/LPL catalytic domain occupies 53–238 (ADTGDEIWVV…NLDGASAAAD (186 aa)). Residues 93 to 100 (RGGQITYH), 165 to 167 (ALG), and 178 to 180 (GLS) contribute to the substrate site. The active-site Acyl-thioester intermediate is cysteine 196.

It belongs to the LipB family.

The protein resides in the cytoplasm. The catalysed reaction is octanoyl-[ACP] + L-lysyl-[protein] = N(6)-octanoyl-L-lysyl-[protein] + holo-[ACP] + H(+). It participates in protein modification; protein lipoylation via endogenous pathway; protein N(6)-(lipoyl)lysine from octanoyl-[acyl-carrier-protein]: step 1/2. Functionally, catalyzes the transfer of endogenously produced octanoic acid from octanoyl-acyl-carrier-protein onto the lipoyl domains of lipoate-dependent enzymes. Lipoyl-ACP can also act as a substrate although octanoyl-ACP is likely to be the physiological substrate. The sequence is that of Octanoyltransferase from Burkholderia orbicola (strain MC0-3).